The sequence spans 137 residues: UPF0146 protein MJ0688 (137 aa).

It belongs to the UPF0146 family.

The protein is UPF0146 protein MJ0688 of Methanocaldococcus jannaschii (strain ATCC 43067 / DSM 2661 / JAL-1 / JCM 10045 / NBRC 100440) (Methanococcus jannaschii).